An 853-amino-acid chain; its full sequence is Bromodomain-containing protein bet-1 (853 aa).

Residues 1–19 (MSEGSGDQSQQRPWASPRQ) show a composition bias toward polar residues. Disordered stretches follow at residues 1–22 (MSEGSGDQSQQRPWASPRQQPI) and 141–245 (SLEQ…LRAK). The Bromo 1 domain occupies 39-145 (RHTNKLDYIM…EVIKKSLEQA (107 aa)). The span at 141–153 (SLEQAPREEHDMD) shows a compositional bias: basic and acidic residues. 2 stretches are compositionally biased toward low complexity: residues 166–175 (SDGGSKSSSS) and 192–215 (SEVSSVTTASAAAPTVSESASVAA). Lysine 252 is covalently cross-linked (Glycyl lysine isopeptide (Lys-Gly) (interchain with G-Cter in SUMO)). Positions 257–366 (QPLLPSMKPC…EVFDRRWAEL (110 aa)) constitute a Bromo 2 domain. Positions 369–381 (SSSRASSVAPQSA) are enriched in low complexity. Positions 369–418 (SSSRASSVAPQSAPIAPTPKVAKSSAPKEPKESRKEHKKETTFEASGAKS) are disordered. Over residues 394 to 410 (APKEPKESRKEHKKETT) the composition is skewed to basic and acidic residues. Residues 419–458 (EDLMQINNALSMIREREEKLKAELAAAQAIKDKLTSVKNR) adopt a coiled-coil conformation. Positions 516 to 601 (DSDDEDNKMA…TIPTLNGNGD (86 aa)) constitute an NET domain. Disordered regions lie at residues 594–814 (PTLN…DEQT) and 819–838 (MRMEAKRARQKEDEGSVSLS). Low complexity predominate over residues 612–624 (TSSGATGSKGSSS). Residues 684 to 696 (QPPSTSREWNQSS) are compositionally biased toward polar residues. The segment covering 708–736 (QPPMSRVPASSSTSVSAIGKNNAAASSNS) has biased composition (low complexity). Positions 786–807 (QFFQSQPTTSATIRSPTESQPG) are enriched in polar residues. The segment covering 819 to 832 (MRMEAKRARQKEDE) has biased composition (basic and acidic residues).

Belongs to the BET family. Interacts with acetylated histone H4. Interacts (via BROMO domain 2) with smo-1 and ubc-9. In terms of tissue distribution, expressed in T-cells, Q-cells, V5-cells and their descendants such as somatic gonad and syncytium.

Its subcellular location is the nucleus. It localises to the chromosome. Functionally, required for the establishment and maintenance of stable cell fate in several lineages including V5.pa, T, Z1/Z4 and QR lineages probably by repressing the expression of cell fate determinants. Required to maintain non-distal tip cell (DTC) fate of somatic gonadal cells through the htz-1-mediated repression of transcription factor ceh-22. Regulates the subnuclear localization of histone variant htz-1 in somatic gonadal cells. Plays a role in the attenuation of the let-60/ras pathway, probably by preventing expression of activators of the pathway. Involved in adult locomotion. Acts together with the sumoylation pathway to prevent muscle myosin depletion in aging adults probably by preventing myoblast growth factor receptor egl-15 overexpression. May play a role in vulva development. The protein is Bromodomain-containing protein bet-1 of Caenorhabditis elegans.